Reading from the N-terminus, the 87-residue chain is Small ribosomal subunit protein bS20 (87 aa).

It belongs to the bacterial ribosomal protein bS20 family.

Functionally, binds directly to 16S ribosomal RNA. The polypeptide is Small ribosomal subunit protein bS20 (Corynebacterium diphtheriae (strain ATCC 700971 / NCTC 13129 / Biotype gravis)).